The following is a 511-amino-acid chain: V-type proton ATPase subunit B, brain isoform (511 aa).

Arg-400 contacts ATP.

Belongs to the ATPase alpha/beta chains family. V-ATPase is a heteromultimeric enzyme made up of two complexes: the ATP-hydrolytic V1 complex and the proton translocation V0 complex. The V1 complex consists of three catalytic AB heterodimers that form a heterohexamer, three peripheral stalks each consisting of EG heterodimers, one central rotor including subunits D and F, and the regulatory subunits C and H. The proton translocation complex V0 consists of the proton transport subunit a, a ring of proteolipid subunits c9c'', rotary subunit d, subunits e and f, and the accessory subunits ATP6AP1/Ac45 and ATP6AP2/PRR. In terms of tissue distribution, kidney; found in early distal nephron, encompassing thick ascending limbs and distal convoluted tubules and in the alpha-intercalated cells of the cortical collecting ducts (at protein level). Expressed in epididymal clear cells (at protein level). Mainly expressed in the organ of Corti and spiral ganglion neurons, in both the early postnatal cochlea (P2) and the adult cochlea (P30).

The protein localises to the apical cell membrane. It localises to the melanosome. The protein resides in the cytoplasm. Its subcellular location is the cytoplasmic vesicle. It is found in the secretory vesicle. The protein localises to the synaptic vesicle membrane. It localises to the clathrin-coated vesicle membrane. In terms of biological role, non-catalytic subunit of the V1 complex of vacuolar(H+)-ATPase (V-ATPase), a multisubunit enzyme composed of a peripheral complex (V1) that hydrolyzes ATP and a membrane integral complex (V0) that translocates protons. V-ATPase is responsible for acidifying and maintaining the pH of intracellular compartments and in some cell types, is targeted to the plasma membrane, where it is responsible for acidifying the extracellular environment. In renal intercalated cells, can partially compensate the lack of ATP6V1B1 and mediate secretion of protons (H+) into the urine under base-line conditions but not in conditions of acid load. The sequence is that of V-type proton ATPase subunit B, brain isoform (Atp6v1b2) from Mus musculus (Mouse).